The sequence spans 232 residues: Ribosomal RNA small subunit methyltransferase G (232 aa).

Residues G93, L98, 144-145 (VE), and R163 each bind S-adenosyl-L-methionine.

The protein belongs to the methyltransferase superfamily. RNA methyltransferase RsmG family.

The protein localises to the cytoplasm. The catalysed reaction is guanosine(527) in 16S rRNA + S-adenosyl-L-methionine = N(7)-methylguanosine(527) in 16S rRNA + S-adenosyl-L-homocysteine. In terms of biological role, specifically methylates the N7 position of guanine in position 527 of 16S rRNA. The polypeptide is Ribosomal RNA small subunit methyltransferase G (Burkholderia pseudomallei (strain 1710b)).